Consider the following 350-residue polypeptide: Alcohol dehydrogenase 1 (350 aa).

Zn(2+) contacts are provided by Cys46, His69, Cys100, Cys103, Cys106, Cys114, and Cys156. NAD(+)-binding positions include 180 to 186, Asp204, Lys209, 271 to 273, and Arg343; these read GAAGGLG and VGL.

The protein belongs to the zinc-containing alcohol dehydrogenase family. As to quaternary structure, homotetramer. Requires Zn(2+) as cofactor.

The protein resides in the cytoplasm. The enzyme catalyses a primary alcohol + NAD(+) = an aldehyde + NADH + H(+). It catalyses the reaction a secondary alcohol + NAD(+) = a ketone + NADH + H(+). In Kluyveromyces lactis (strain ATCC 8585 / CBS 2359 / DSM 70799 / NBRC 1267 / NRRL Y-1140 / WM37) (Yeast), this protein is Alcohol dehydrogenase 1 (ADH1).